The following is a 375-amino-acid chain: Holliday junction branch migration complex subunit RuvB (375 aa).

Residues 1 to 22 (MAIVSSKQSPQPDGSKKPSQAK) are compositionally biased toward polar residues. Positions 1–44 (MAIVSSKQSPQPDGSKKPSQAKSVKKSVEHSKPQQTDALLQPEA) are disordered. Positions 13–218 (DGSKKPSQAK…FGFVQRLRFY (206 aa)) are large ATPase domain (RuvB-L). ATP contacts are provided by residues Leu-57, Arg-58, Gly-99, Lys-102, Thr-103, Thr-104, 165–167 (EDF), Arg-208, Tyr-218, and Arg-255. Residue Thr-103 participates in Mg(2+) binding. The tract at residues 219-289 (EADELGQIVL…IAQEALELFN (71 aa)) is small ATPAse domain (RuvB-S). The head domain (RuvB-H) stretch occupies residues 292–375 (PCGLDWTDRR…PPDEQMRLLS (84 aa)). Residues Arg-347 and Arg-352 each coordinate DNA.

The protein belongs to the RuvB family. In terms of assembly, homohexamer. Forms an RuvA(8)-RuvB(12)-Holliday junction (HJ) complex. HJ DNA is sandwiched between 2 RuvA tetramers; dsDNA enters through RuvA and exits via RuvB. An RuvB hexamer assembles on each DNA strand where it exits the tetramer. Each RuvB hexamer is contacted by two RuvA subunits (via domain III) on 2 adjacent RuvB subunits; this complex drives branch migration. In the full resolvosome a probable DNA-RuvA(4)-RuvB(12)-RuvC(2) complex forms which resolves the HJ.

Its subcellular location is the cytoplasm. The catalysed reaction is ATP + H2O = ADP + phosphate + H(+). Its function is as follows. The RuvA-RuvB-RuvC complex processes Holliday junction (HJ) DNA during genetic recombination and DNA repair, while the RuvA-RuvB complex plays an important role in the rescue of blocked DNA replication forks via replication fork reversal (RFR). RuvA specifically binds to HJ cruciform DNA, conferring on it an open structure. The RuvB hexamer acts as an ATP-dependent pump, pulling dsDNA into and through the RuvAB complex. RuvB forms 2 homohexamers on either side of HJ DNA bound by 1 or 2 RuvA tetramers; 4 subunits per hexamer contact DNA at a time. Coordinated motions by a converter formed by DNA-disengaged RuvB subunits stimulates ATP hydrolysis and nucleotide exchange. Immobilization of the converter enables RuvB to convert the ATP-contained energy into a lever motion, pulling 2 nucleotides of DNA out of the RuvA tetramer per ATP hydrolyzed, thus driving DNA branch migration. The RuvB motors rotate together with the DNA substrate, which together with the progressing nucleotide cycle form the mechanistic basis for DNA recombination by continuous HJ branch migration. Branch migration allows RuvC to scan DNA until it finds its consensus sequence, where it cleaves and resolves cruciform DNA. This is Holliday junction branch migration complex subunit RuvB from Acaryochloris marina (strain MBIC 11017).